The chain runs to 94 residues: Co-chaperonin GroES (94 aa).

The protein belongs to the GroES chaperonin family. As to quaternary structure, heptamer of 7 subunits arranged in a ring. Interacts with the chaperonin GroEL.

The protein resides in the cytoplasm. Its function is as follows. Together with the chaperonin GroEL, plays an essential role in assisting protein folding. The GroEL-GroES system forms a nano-cage that allows encapsulation of the non-native substrate proteins and provides a physical environment optimized to promote and accelerate protein folding. GroES binds to the apical surface of the GroEL ring, thereby capping the opening of the GroEL channel. This chain is Co-chaperonin GroES, found in Finegoldia magna (strain ATCC 29328 / DSM 20472 / WAL 2508) (Peptostreptococcus magnus).